Reading from the N-terminus, the 353-residue chain is MPLVCLADFKAHAQKQLSKTSWDFIEGEADDGITYSENIAAFKRIRLRPRYLRDMSKVDTRTTIQGQEISAPICISPTAFHSIAWPDGEKSTARAAQEANICYVISSYASYSLEDIVAAAPEGFRWFQLYMKSDWDFNKQMVQRAEALGFKALVITIDTPVLGNRRRDKRNQLNLEANILLKDLRALKEEKPTQSVPVSFPKASFCWNDLSLLQSITRLPIILKGILTKEDAELAMKHNVQGIVVSNHGGRQLDEVSASIDALREVVAAVKGKIEVYMDGGVRTGTDVLKALALGARCIFLGRPILWGLACKGEDGVKEVLDILTAELHRCMTLSGCQSVAEISPDLIQFSRL.

An FMN hydroxy acid dehydrogenase domain is found at 2–353; sequence PLVCLADFKA…SPDLIQFSRL (352 aa). Residues 77–79, Ser-106, and Gln-128 contribute to the FMN site; that span reads PTA. Tyr-130 serves as a coordination point for a 2-oxocarboxylate. At Ser-133 the chain carries Phosphoserine. Position 156 (Thr-156) interacts with FMN. A 2-oxocarboxylate is bound at residue Arg-165. Residue Lys-224 participates in FMN binding. Catalysis depends on His-248, which acts as the Proton acceptor. Arg-251 lines the a 2-oxocarboxylate pocket. Residues 279-283 and 302-303 each bind FMN; these read DGGVR and GR. The Microbody targeting signal signature appears at 351–353; the sequence is SRL.

Belongs to the FMN-dependent alpha-hydroxy acid dehydrogenase family. As to quaternary structure, homotetramer. Could also form homooctamer. The cofactor is FMN. In terms of tissue distribution, expressed in kidney.

It localises to the peroxisome. The catalysed reaction is a (2S)-2-hydroxycarboxylate + O2 = a 2-oxocarboxylate + H2O2. The enzyme catalyses 2-hydroxyoctanoate + O2 = 2-oxooctanoate + H2O2. It carries out the reaction 2-hydroxyhexadecanoate + O2 = 2-oxohexadecanoate + H2O2. It catalyses the reaction 2-hydroxyhexanoate + O2 = 2-oxohexanoate + H2O2. The catalysed reaction is mandelate + O2 = phenylglyoxylate + H2O2. Is inhibited in vitro by CCPST (4-carboxy-5-(4-chlorophenyl)sulfanyl-1,2,3-thiadiazole). Its function is as follows. Oxidase that catalyzes the oxidation of medium and long chain hydroxyacids such as 2-hydroxyhexadecanoate, 2-hydroxyoctanoate, 2-hydroxyhexanoate and 2-hydroxybutanoate, to the correspondong 2-oxoacids. Its role in the oxidation of 2-hydroxy fatty acids may contribute to the general pathway of fatty acid alpha-oxidation. Can also use mandelate as substrate. Active in vitro with the artificial electron acceptor 2,6-dichlorophenolindophenol (DCIP), but O2 is believed to be the physiological electron acceptor, leading to the production of H2O2. The protein is 2-Hydroxyacid oxidase 2 (Hao2) of Rattus norvegicus (Rat).